Reading from the N-terminus, the 376-residue chain is TelA-like protein SERP0976 (376 aa).

It belongs to the TelA family.

The chain is TelA-like protein SERP0976 from Staphylococcus epidermidis (strain ATCC 35984 / DSM 28319 / BCRC 17069 / CCUG 31568 / BM 3577 / RP62A).